Here is a 159-residue protein sequence, read N- to C-terminus: Large ribosomal subunit protein uL11 (159 aa).

It belongs to the universal ribosomal protein uL11 family. In terms of assembly, part of the ribosomal stalk of the 50S ribosomal subunit. Interacts with L10 and the large rRNA to form the base of the stalk. L10 forms an elongated spine to which L12 dimers bind in a sequential fashion forming a multimeric L10(L12)X complex.

Forms part of the ribosomal stalk which helps the ribosome interact with GTP-bound translation factors. The sequence is that of Large ribosomal subunit protein uL11 from Methanothrix thermoacetophila (strain DSM 6194 / JCM 14653 / NBRC 101360 / PT) (Methanosaeta thermophila).